A 173-amino-acid polypeptide reads, in one-letter code: Photosystem I assembly protein Ycf3 (173 aa).

TPR repeat units lie at residues alanine 35–proline 68, alanine 72–methionine 105, and glycine 120–asparagine 153.

It belongs to the Ycf3 family.

Its subcellular location is the cellular thylakoid membrane. Essential for the assembly of the photosystem I (PSI) complex. May act as a chaperone-like factor to guide the assembly of the PSI subunits. In Synechococcus sp. (strain RCC307), this protein is Photosystem I assembly protein Ycf3.